A 299-amino-acid polypeptide reads, in one-letter code: Acetaldehyde dehydrogenase (299 aa).

11–14 (SGNI) lines the NAD(+) pocket. Cysteine 126 acts as the Acyl-thioester intermediate in catalysis. NAD(+)-binding positions include 157-165 (SAGPGTRAN) and asparagine 267.

It belongs to the acetaldehyde dehydrogenase family.

It carries out the reaction acetaldehyde + NAD(+) + CoA = acetyl-CoA + NADH + H(+). This Bacillus thuringiensis (strain Al Hakam) protein is Acetaldehyde dehydrogenase.